We begin with the raw amino-acid sequence, 618 residues long: Glucose starvation modulator protein 1 (618 aa).

A DNA-binding region (zn(2)-C6 fungal-type) is located at residues 20 to 48; sequence CEFCHTKHIQCDVGRPCQNCLKRNIGKFC. A disordered region spans residues 325–353; sequence ANANTQPSHNAKLESECDSSSHSDADLEK. A compositionally biased stretch (basic and acidic residues) spans 335 to 353; the sequence is AKLESECDSSSHSDADLEK. The PAS domain occupies 466–538; sequence LLDLENMAKL…QIFNELLAFG (73 aa).

The protein belongs to the ERT1/acuK family.

It is found in the nucleus. Transcription factor which regulates nonfermentable carbon utilization. Binds specifically to 5'-CGGN(8)CGG-3' and 5'-CGGN(9)CGG-3' sequences in the promoter region. In Saccharomyces cerevisiae (strain JAY291) (Baker's yeast), this protein is Glucose starvation modulator protein 1 (GSM1).